Consider the following 105-residue polypeptide: Phosphoribosyl-ATP pyrophosphatase (105 aa).

This sequence belongs to the PRA-PH family.

Its subcellular location is the cytoplasm. It catalyses the reaction 1-(5-phospho-beta-D-ribosyl)-ATP + H2O = 1-(5-phospho-beta-D-ribosyl)-5'-AMP + diphosphate + H(+). The protein operates within amino-acid biosynthesis; L-histidine biosynthesis; L-histidine from 5-phospho-alpha-D-ribose 1-diphosphate: step 2/9. The sequence is that of Phosphoribosyl-ATP pyrophosphatase from Roseobacter denitrificans (strain ATCC 33942 / OCh 114) (Erythrobacter sp. (strain OCh 114)).